Here is a 574-residue protein sequence, read N- to C-terminus: Glycine--tRNA ligase (574 aa).

Residues Arg-96 and Glu-162 each contribute to the substrate site. Residues 194–196 (RNE), 204–209 (IRLREF), 327–328 (EC), and 450–453 (GIDR) contribute to the ATP site. 209-213 (FTQAE) is a binding site for substrate. Residue 446–450 (EPSYG) participates in substrate binding.

This sequence belongs to the class-II aminoacyl-tRNA synthetase family.

It localises to the cytoplasm. The enzyme catalyses tRNA(Gly) + glycine + ATP = glycyl-tRNA(Gly) + AMP + diphosphate. Catalyzes the attachment of glycine to tRNA(Gly). This chain is Glycine--tRNA ligase, found in Methanococcus vannielii (strain ATCC 35089 / DSM 1224 / JCM 13029 / OCM 148 / SB).